Reading from the N-terminus, the 242-residue chain is UPF0309 protein BSUIS_B0903 (242 aa).

The region spanning 30-214 is the SIS domain; it reads AADLIAAAAR…ARLVGEGDAP (185 aa).

This sequence belongs to the UPF0309 family.

The chain is UPF0309 protein BSUIS_B0903 from Brucella suis (strain ATCC 23445 / NCTC 10510).